A 681-amino-acid chain; its full sequence is Epithelial splicing regulatory protein 1 (681 aa).

3 RRM domains span residues 225–302, 326–406, and 445–525; these read TVVR…KATG, VIVR…RSTA, and DCIR…QCSA. Phosphoserine is present on serine 543. At arginine 582 the chain carries Omega-N-methylarginine.

It belongs to the ESRP family. As to expression, epithelial cell-specific.

Its subcellular location is the nucleus. In terms of biological role, mRNA splicing factor that regulates the formation of epithelial cell-specific isoforms. Specifically regulates the expression of FGFR2-IIIb, an epithelial cell-specific isoform of FGFR2. Also regulates the splicing of CD44, CTNND1, ENAH, 3 transcripts that undergo changes in splicing during the epithelial-to-mesenchymal transition (EMT). Acts by directly binding specific sequences in mRNAs. Binds the GU-rich sequence motifs in the ISE/ISS-3, a cis-element regulatory region present in the mRNA of FGFR2. Regulates splicing and expression of genes involved in inner ear development, auditory hair cell differentiation, and cell fate specification in the cochlear epithelium. The protein is Epithelial splicing regulatory protein 1 (ESRP1) of Homo sapiens (Human).